A 1256-amino-acid chain; its full sequence is Neuronal cell adhesion molecule (1256 aa).

A signal peptide spans 1–29 (MQLKIMPKKKHLSAGGVPLILFLCQMISA). Over 30–1119 (LDVPLDLVQP…ASRQVDIATQ (1090 aa)) the chain is Extracellular. Ig-like C2-type domains lie at 40-128 (PTIT…AAVS) and 135-229 (PSRS…QPIS). 2 cysteine pairs are disulfide-bonded: Cys62–Cys117 and Cys161–Cys212. Residue Asn77 is glycosylated (N-linked (GlcNAc...) asparagine). N-linked (GlcNAc...) asparagine glycans are attached at residues Asn217, Asn239, Asn245, Asn270, Asn308, and Asn371. Ig-like C2-type domains are found at residues 261–350 (PPTF…ISVT), 355–442 (PYWI…AFVN), 448–535 (PRIL…VHLE), and 539–626 (PTRI…AVLR). Cys286 and Cys334 are disulfide-bonded. An intrachain disulfide couples Cys376 to Cys426. N-linked (GlcNAc...) asparagine glycans are attached at residues Asn427 and Asn501. Disulfide bonds link Cys470–Cys519 and Cys561–Cys610. Residues Asn613, Asn710, Asn796, Asn852, Asn987, Asn1003, Asn1013, and Asn1067 are each glycosylated (N-linked (GlcNAc...) asparagine). 4 consecutive Fibronectin type-III domains span residues 643–738 (PPFD…TKAA), 740–837 (PDQN…SGED), 842–944 (APGN…TPEG), and 948–1045 (APSS…VDEA). A helical transmembrane segment spans residues 1120–1142 (GWFIGLMCAVALLILILLIVCFI). Over 1143 to 1256 (RRNKGGKYPV…SPVNAMNSFV (114 aa)) the chain is Cytoplasmic. Positions 1151–1171 (PVKEKEDAHADPEIQPMKEDD) are enriched in basic and acidic residues. The disordered stretch occupies residues 1151-1256 (PVKEKEDAHA…SPVNAMNSFV (106 aa)). At Thr1173 the chain carries Phosphothreonine. Tyr1177 is subject to Phosphotyrosine. Ser1178 carries the phosphoserine modification. Residues 1193–1202 (PSDRTVKKED) show a composition bias toward basic and acidic residues. Phosphoserine is present on residues Ser1203, Ser1206, Ser1223, Ser1242, Ser1243, and Ser1247. Positions 1240 to 1256 (NESSEAPSPVNAMNSFV) are enriched in polar residues.

The protein belongs to the immunoglobulin superfamily. L1/neurofascin/NgCAM family. Constituent of a NFASC/NRCAM/ankyrin-G complex. Detected in a complex with CNTN1 and PTPRB. Interacts with GLDN/gliomedin and MYOC. Detected in sciatic nerve. Detected in brain, especially in the cerebellum Purkinje cell layer, inner granule cell layer and molecular layer (at protein level). Detected in neurons and Schwann cells.

Its subcellular location is the cell membrane. The protein resides in the cell projection. It is found in the axon. The protein localises to the secreted. Functionally, cell adhesion protein that is required for normal responses to cell-cell contacts in brain and in the peripheral nervous system. Plays a role in neurite outgrowth in response to contactin binding. Plays a role in mediating cell-cell contacts between Schwann cells and axons. Plays a role in the formation and maintenance of the nodes of Ranvier on myelinated axons. Nodes of Ranvier contain clustered sodium channels that are crucial for the saltatory propagation of action potentials along myelinated axons. During development, nodes of Ranvier are formed by the fusion of two heminodes. Required for normal clustering of sodium channels at heminodes; not required for the formation of mature nodes with normal sodium channel clusters. Required, together with GLDN, for maintaining NFASC and sodium channel clusters at mature nodes of Ranvier. The sequence is that of Neuronal cell adhesion molecule (Nrcam) from Mus musculus (Mouse).